The primary structure comprises 139 residues: Hydrogenase maturation factor HypA (139 aa).

Residue His2 participates in Ni(2+) binding. Zn(2+)-binding residues include Cys73, Cys76, Cys110, and Cys113.

Belongs to the HypA/HybF family.

Its function is as follows. Involved in the maturation of [NiFe] hydrogenases. Required for nickel insertion into the metal center of the hydrogenase. The chain is Hydrogenase maturation factor HypA from Pyrococcus furiosus (strain ATCC 43587 / DSM 3638 / JCM 8422 / Vc1).